A 439-amino-acid chain; its full sequence is Glutamate-1-semialdehyde 2,1-aminomutase (439 aa).

Lys-273 is subject to N6-(pyridoxal phosphate)lysine.

The protein belongs to the class-III pyridoxal-phosphate-dependent aminotransferase family. HemL subfamily. As to quaternary structure, homodimer. Requires pyridoxal 5'-phosphate as cofactor.

The protein localises to the cytoplasm. The enzyme catalyses (S)-4-amino-5-oxopentanoate = 5-aminolevulinate. It participates in porphyrin-containing compound metabolism; protoporphyrin-IX biosynthesis; 5-aminolevulinate from L-glutamyl-tRNA(Glu): step 2/2. The chain is Glutamate-1-semialdehyde 2,1-aminomutase from Paenarthrobacter aurescens (strain TC1).